The sequence spans 414 residues: Probable acetyl-CoA acetyltransferase (414 aa).

The active-site Acyl-thioester intermediate is Cys-110. Residues Tyr-205, 244–246 (KVL), and Lys-249 contribute to the CoA site. Tyr-205 provides a ligand contact to K(+). 2 residues coordinate K(+): Ala-266 and Ala-268. Ser-269 contributes to the CoA binding site. Val-366 provides a ligand contact to K(+). Catalysis depends on proton acceptor residues His-370 and Cys-400.

The protein belongs to the thiolase-like superfamily. Thiolase family.

It catalyses the reaction 2 acetyl-CoA = acetoacetyl-CoA + CoA. In Dictyostelium discoideum (Social amoeba), this protein is Probable acetyl-CoA acetyltransferase.